We begin with the raw amino-acid sequence, 253 residues long: Putative cysteine-rich repeat secretory protein 33 (253 aa).

Positions 1-28 (MFSSYSLCKCLVSFHILAIQVLISCASS) are cleaved as a signal peptide. Gnk2-homologous domains are found at residues 34-133 (EYLN…MIND) and 141-250 (YDNI…LYPF).

It belongs to the cysteine-rich repeat secretory protein family.

The protein resides in the secreted. The chain is Putative cysteine-rich repeat secretory protein 33 (CRRSP33) from Arabidopsis thaliana (Mouse-ear cress).